The sequence spans 488 residues: Protein nucleotidyltransferase YdiU (488 aa).

G91, G93, R94, K114, D126, G127, R177, and R184 together coordinate ATP. D253 functions as the Proton acceptor in the catalytic mechanism. Mg(2+) contacts are provided by N254 and D263. Residue D263 coordinates ATP.

The protein belongs to the SELO family. The cofactor is Mg(2+). Mn(2+) is required as a cofactor.

The catalysed reaction is L-seryl-[protein] + ATP = 3-O-(5'-adenylyl)-L-seryl-[protein] + diphosphate. It catalyses the reaction L-threonyl-[protein] + ATP = 3-O-(5'-adenylyl)-L-threonyl-[protein] + diphosphate. It carries out the reaction L-tyrosyl-[protein] + ATP = O-(5'-adenylyl)-L-tyrosyl-[protein] + diphosphate. The enzyme catalyses L-histidyl-[protein] + UTP = N(tele)-(5'-uridylyl)-L-histidyl-[protein] + diphosphate. The catalysed reaction is L-seryl-[protein] + UTP = O-(5'-uridylyl)-L-seryl-[protein] + diphosphate. It catalyses the reaction L-tyrosyl-[protein] + UTP = O-(5'-uridylyl)-L-tyrosyl-[protein] + diphosphate. Functionally, nucleotidyltransferase involved in the post-translational modification of proteins. It can catalyze the addition of adenosine monophosphate (AMP) or uridine monophosphate (UMP) to a protein, resulting in modifications known as AMPylation and UMPylation. This is Protein nucleotidyltransferase YdiU from Bacillus cereus (strain ZK / E33L).